The chain runs to 294 residues: DNA adenine methyltransferase YhdJ (294 aa).

The tract at residues Thr275–Lys294 is disordered. Residues Arg283–Lys294 are compositionally biased toward basic and acidic residues.

The protein belongs to the N(4)/N(6)-methyltransferase family.

The catalysed reaction is a 2'-deoxyadenosine in DNA + S-adenosyl-L-methionine = an N(6)-methyl-2'-deoxyadenosine in DNA + S-adenosyl-L-homocysteine + H(+). Its function is as follows. A beta subtype methylase, recognizes the double-stranded sequence 5'-ATGCAT-3' and methylates A-5. The chain is DNA adenine methyltransferase YhdJ (yhdJ) from Escherichia coli (strain K12).